A 503-amino-acid polypeptide reads, in one-letter code: MEEFQGYLELDRSQQHDFLYPLIFREYIYALAHDRGLNRSVLLDNVSYDKKSSLLIIKRLISRMYQQNHFIISVNDSNQNKFFGYNKNLYSQMISEGFAVIVEIPFSLRLVSSLEETETVKSYNLRSIHSIFPFFEDKFPHLNYASDVLIPYPIHLEILVQTLRYCVKDPSSLHLLRLFLHEYYNWNTLITPKKSIFAKSNQRLFLLLYNSYVCEYESILLFLRNQSNHLRLTSSGILFERIRFYEKIKYPVEEVFANDFPATLWFFKDPFIQYVRYQGKSILASKDTPLLMNKWKYYLVHFWQCHFYVWSQPGRIHINQLSKHSFDFLGYLSSIRPNISVVRSQLLENSFLMDNAMKKLDTLFPIIPMIGSLAKVKFCNTSGHPISKSSWADSSDSDIIDRFVRIGENLSHYYSGSSKKKSLYRIKYILRLSCVKTLARKHKSTVRTFLKRLGPKLLDEFFTEEEQIFSLLFPRTSSTLKRFYRGRIWYLDILCINDLVNHE.

The protein belongs to the intron maturase 2 family. MatK subfamily.

Its subcellular location is the plastid. The protein resides in the chloroplast. Usually encoded in the trnK tRNA gene intron. Probably assists in splicing its own and other chloroplast group II introns. In Rosa foetida (Austrian briar), this protein is Maturase K.